Consider the following 205-residue polypeptide: Thymidylate kinase (205 aa).

ATP is bound at residue 10 to 17 (GLEGAGKS).

It belongs to the thymidylate kinase family.

It catalyses the reaction dTMP + ATP = dTDP + ADP. Functionally, phosphorylation of dTMP to form dTDP in both de novo and salvage pathways of dTTP synthesis. This chain is Thymidylate kinase, found in Idiomarina loihiensis (strain ATCC BAA-735 / DSM 15497 / L2-TR).